Reading from the N-terminus, the 477-residue chain is Adenosylhomocysteinase (477 aa).

Substrate contacts are provided by threonine 63, aspartate 142, and glutamate 202. Threonine 203–threonine 205 serves as a coordination point for NAD(+). The substrate site is built by lysine 232 and aspartate 236. NAD(+) is bound by residues asparagine 237, glycine 266–glycine 271, glutamate 289, asparagine 324, isoleucine 345–histidine 347, and asparagine 390.

It belongs to the adenosylhomocysteinase family. NAD(+) serves as cofactor.

Its subcellular location is the cytoplasm. It carries out the reaction S-adenosyl-L-homocysteine + H2O = L-homocysteine + adenosine. The protein operates within amino-acid biosynthesis; L-homocysteine biosynthesis; L-homocysteine from S-adenosyl-L-homocysteine: step 1/1. Its function is as follows. May play a key role in the regulation of the intracellular concentration of adenosylhomocysteine. The polypeptide is Adenosylhomocysteinase (Methylibium petroleiphilum (strain ATCC BAA-1232 / LMG 22953 / PM1)).